Here is a 454-residue protein sequence, read N- to C-terminus: NADP-specific glutamate dehydrogenase (454 aa).

Residue Ser-2 is modified to N-acetylserine. Residue Lys-114 is part of the active site.

Belongs to the Glu/Leu/Phe/Val dehydrogenases family. In terms of assembly, homohexamer.

The catalysed reaction is L-glutamate + NADP(+) + H2O = 2-oxoglutarate + NH4(+) + NADPH + H(+). In Neurospora crassa (strain ATCC 24698 / 74-OR23-1A / CBS 708.71 / DSM 1257 / FGSC 987), this protein is NADP-specific glutamate dehydrogenase (gdh).